The sequence spans 56 residues: Repressor-like protein SSo7c4 (56 aa).

The SpoVT-AbrB domain occupies 4 to 51; sequence EEIVKVSRNYQVTIPAKVRQKFQIKEGDLVKVTFDESGGVVKIQLLDS.

The chain is Repressor-like protein SSo7c4 from Saccharolobus solfataricus (strain ATCC 35092 / DSM 1617 / JCM 11322 / P2) (Sulfolobus solfataricus).